The following is a 169-amino-acid chain: Pyrophosphate-energized proton pump 1 (169 aa).

A run of 3 helical transmembrane segments spans residues 45-65 (YVVA…GIAM), 114-134 (VIPS…VLLI), and 141-161 (AFAA…LVAI).

It belongs to the H(+)-translocating pyrophosphatase (TC 3.A.10) family. As to quaternary structure, homodimer. Mg(2+) serves as cofactor.

The protein resides in the cell inner membrane. The enzyme catalyses diphosphate + H2O + H(+)(in) = 2 phosphate + 2 H(+)(out). Functionally, proton pump that utilizes the energy of pyrophosphate hydrolysis as the driving force for proton movement across the membrane. Generates a proton motive force. The sequence is that of Pyrophosphate-energized proton pump 1 (hppA1) from Rhizobium leguminosarum bv. trifolii.